Here is a 208-residue protein sequence, read N- to C-terminus: Exosome complex component CSL4 homolog (208 aa).

In terms of assembly, component of the RNA exosome complex. As to expression, ubiquitously expressed.

Its subcellular location is the nucleus. It localises to the nucleolus. The protein resides in the nucleoplasm. Non-catalytic component of the RNA exosome complex which has 3'-&gt;5' exoribonuclease activity and participates in a multitude of cellular RNA processing and degradation events. Involved in regulation of antisense ribosomal siRNA production. Involved in response to cold-warm shock. This is Exosome complex component CSL4 homolog from Caenorhabditis elegans.